The sequence spans 287 residues: 4-hydroxybenzoate octaprenyltransferase (287 aa).

Transmembrane regions (helical) follow at residues 19 to 39, 42 to 62, 95 to 115, 136 to 156, 166 to 186, 210 to 230, 233 to 253, and 264 to 284; these read IGSLLLLWPTLWALFLAADGL, WHVLIVFVLGVVFMRSAGCVI, FFAVLVVCSFLLVLTMNTLTI, YLPQFVLGLAFSWAIPMAYAA, WLLFVINALWTIAYDTQYAMV, IIGLLQLSVLALLIVLGSQLA, GIYYWGILAAAGFFVYQQWLI, and AFLNNNYVGGLIFIAISASVL.

Belongs to the UbiA prenyltransferase family. Mg(2+) serves as cofactor.

The protein resides in the cell inner membrane. The enzyme catalyses all-trans-octaprenyl diphosphate + 4-hydroxybenzoate = 4-hydroxy-3-(all-trans-octaprenyl)benzoate + diphosphate. It participates in cofactor biosynthesis; ubiquinone biosynthesis. Functionally, catalyzes the prenylation of para-hydroxybenzoate (PHB) with an all-trans polyprenyl group. Mediates the second step in the final reaction sequence of ubiquinone-8 (UQ-8) biosynthesis, which is the condensation of the polyisoprenoid side chain with PHB, generating the first membrane-bound Q intermediate 3-octaprenyl-4-hydroxybenzoate. This is 4-hydroxybenzoate octaprenyltransferase from Aliivibrio fischeri (strain MJ11) (Vibrio fischeri).